Consider the following 202-residue polypeptide: Endothelin-1 (202 aa).

An N-terminal signal peptide occupies residues 1–23; it reads MDYFSMMVSLLLVAFHGAPETAA. A disordered region spans residues 24 to 49; sequence SGTELSTGAENPGEKPPASAPWRPRR. Residues 24–50 constitute a propeptide that is removed on maturation; sequence SGTELSTGAENPGEKPPASAPWRPRRS. Intrachain disulfides connect Cys53/Cys67 and Cys55/Cys63. A propeptide spanning residues 74-202 is cleaved from the precursor; that stretch reads VNTPGHIVPY…EQKVTHNRTH (129 aa). The tract at residues 110 to 124 is endothelin-like; the sequence is CQCTSPHDKKCWNFC.

The protein belongs to the endothelin/sarafotoxin family.

The protein resides in the secreted. Functionally, endothelins are endothelium-derived vasoconstrictor peptides. Probable ligand for G-protein coupled receptors EDNRA and EDNRB which activates PTK2B, BCAR1, BCAR3 and, GTPases RAP1 and RHOA cascade in glomerular mesangial cells. Also binds the DEAR/FBXW7-AS1 receptor. Promotes mesenteric arterial wall remodeling via activation of ROCK signaling and subsequent colocalization of NFATC3 with F-actin filaments. NFATC3 then translocates to the nucleus where it subsequently promotes the transcription of the smooth muscle hypertrophy and differentiation marker ACTA2. The sequence is that of Endothelin-1 (EDN1) from Oryctolagus cuniculus (Rabbit).